The chain runs to 137 residues: Large ribosomal subunit protein uL16 (137 aa).

The protein belongs to the universal ribosomal protein uL16 family. As to quaternary structure, part of the 50S ribosomal subunit.

Its function is as follows. Binds 23S rRNA and is also seen to make contacts with the A and possibly P site tRNAs. This chain is Large ribosomal subunit protein uL16, found in Coxiella burnetii (strain RSA 331 / Henzerling II).